The following is a 504-amino-acid chain: D-alanine--D-alanyl carrier protein ligase (504 aa).

Residue 152-153 participates in ATP binding; it reads TS. Residue Asp197 coordinates D-alanine. Residue 292-297 participates in ATP binding; that stretch reads NTYGPT. Val301 provides a ligand contact to D-alanine. ATP-binding positions include Asp383, 394 to 397, and Lys492; that span reads YNGR. Lys492 contacts D-alanine.

It belongs to the ATP-dependent AMP-binding enzyme family. DltA subfamily.

It localises to the cytoplasm. The enzyme catalyses holo-[D-alanyl-carrier protein] + D-alanine + ATP = D-alanyl-[D-alanyl-carrier protein] + AMP + diphosphate. It participates in cell wall biogenesis; lipoteichoic acid biosynthesis. In terms of biological role, catalyzes the first step in the D-alanylation of lipoteichoic acid (LTA), the activation of D-alanine and its transfer onto the D-alanyl carrier protein (Dcp) DltC. In an ATP-dependent two-step reaction, forms a high energy D-alanyl-AMP intermediate, followed by transfer of the D-alanyl residue as a thiol ester to the phosphopantheinyl prosthetic group of the Dcp. D-alanylation of LTA plays an important role in modulating the properties of the cell wall in Gram-positive bacteria, influencing the net charge of the cell wall. The protein is D-alanine--D-alanyl carrier protein ligase of Bacillus thuringiensis (strain Al Hakam).